Reading from the N-terminus, the 78-residue chain is Large ribosomal subunit protein uL29 (78 aa).

It belongs to the universal ribosomal protein uL29 family.

This chain is Large ribosomal subunit protein uL29, found in Crocosphaera subtropica (strain ATCC 51142 / BH68) (Cyanothece sp. (strain ATCC 51142)).